Consider the following 484-residue polypeptide: Glutamate--tRNA ligase (484 aa).

Residues 11 to 21 (PSPTGLLHIGN) carry the 'HIGH' region motif. A 'KMSKS' region motif is present at residues 255 to 259 (KLSKR). An ATP-binding site is contributed by Lys258.

It belongs to the class-I aminoacyl-tRNA synthetase family. Glutamate--tRNA ligase type 1 subfamily. Monomer.

The protein localises to the cytoplasm. It catalyses the reaction tRNA(Glu) + L-glutamate + ATP = L-glutamyl-tRNA(Glu) + AMP + diphosphate. Its function is as follows. Catalyzes the attachment of glutamate to tRNA(Glu) in a two-step reaction: glutamate is first activated by ATP to form Glu-AMP and then transferred to the acceptor end of tRNA(Glu). The polypeptide is Glutamate--tRNA ligase (Streptococcus agalactiae serotype Ia (strain ATCC 27591 / A909 / CDC SS700)).